Here is a 101-residue protein sequence, read N- to C-terminus: Large ribosomal subunit protein uL23 (101 aa).

It belongs to the universal ribosomal protein uL23 family. In terms of assembly, part of the 50S ribosomal subunit. Contacts protein L29, and trigger factor when it is bound to the ribosome.

One of the early assembly proteins it binds 23S rRNA. One of the proteins that surrounds the polypeptide exit tunnel on the outside of the ribosome. Forms the main docking site for trigger factor binding to the ribosome. The chain is Large ribosomal subunit protein uL23 from Thiobacillus denitrificans (strain ATCC 25259 / T1).